A 464-amino-acid chain; its full sequence is Galactose-proton symporter (464 aa).

Topologically, residues 1–15 (MPDAKKQGRSNKAMT) are cytoplasmic. Residues 16-36 (FFVCFLAALAGLLFGLDIGVI) traverse the membrane as a helical segment. The Periplasmic segment spans residues 37-56 (AGALPFIADEFQITSHTQEW). Residues 57-77 (VVSSMMFGAAVGAVGSGWLSF) traverse the membrane as a helical segment. Residues 78–84 (KLGRKKS) are Cytoplasmic-facing. A helical transmembrane segment spans residues 85 to 105 (LMIGAILFVAGSLFSAAAPNV). At 106-112 (EVLILSR) the chain is on the periplasmic side. Residues 113 to 133 (VLLGLAVGVASYTAPLYLSEI) traverse the membrane as a helical segment. Residues 134–139 (APEKIR) lie on the Cytoplasmic side of the membrane. Residues 140-160 (GSMISMYQLMITIGILGAYLS) traverse the membrane as a helical segment. The Periplasmic portion of the chain corresponds to 161 to 171 (DTAFSYTGAWR). A helical membrane pass occupies residues 172 to 192 (WMLGVIIIPAILLLIGVFFLP). The Cytoplasmic portion of the chain corresponds to 193 to 250 (DSPRWFAAKRRFVDAERVLLRLRDTSAEAKRELDEIRESLQVKQSGWALFKENSNFRR). A helical transmembrane segment spans residues 251 to 271 (AVFLGVLLQVMQQFTGMNVIM). The Periplasmic segment spans residues 272 to 290 (YYAPKIFELAGYTNTTEQM). The chain crosses the membrane as a helical span at residues 291 to 311 (WGTVIVGLTNVLATFIAIGLV). Over 312–321 (DRWGRKPTLT) the chain is Cytoplasmic. The chain crosses the membrane as a helical span at residues 322 to 342 (LGFLVMAAGMGVLGTMMHIGI). Residues 343-351 (HSPSAQYFA) lie on the Periplasmic side of the membrane. Residues 352-372 (IAMLLMFIVGFAMSAGPLIWV) traverse the membrane as a helical segment. Residues 373–394 (LCSEIQPLKGRDFGITCSTATN) are Cytoplasmic-facing. Residues 395-415 (WIANMIVGATFLTMLNTLGNA) form a helical membrane-spanning segment. Residue Asn-416 is a topological domain, periplasmic. Residues 417–437 (TFWVYAALNVLFILLTLWLVP) traverse the membrane as a helical segment. The Cytoplasmic portion of the chain corresponds to 438-464 (ETKHVSLEHIERNLMKGRKLREIGAHD).

Belongs to the major facilitator superfamily. Sugar transporter (TC 2.A.1.1) family.

It localises to the cell inner membrane. Its function is as follows. Uptake of galactose across the boundary membrane with the concomitant transport of protons into the cell (symport system). This Escherichia coli O6:H1 (strain CFT073 / ATCC 700928 / UPEC) protein is Galactose-proton symporter (galP).